Reading from the N-terminus, the 291-residue chain is Heterogeneous nuclear ribonucleoprotein D-like-B (291 aa).

2 consecutive RRM domains span residues 34–116 and 119–196; these read SKMF…QGKE and KKVF…AAQP. The tract at residues 196–226 is disordered; the sequence is PKEVYRQQQQKQQKGGRGGTRGRGRGQGYSN. The segment covering 210–222 has biased composition (gly residues); sequence GGRGGTRGRGRGQ.

The protein localises to the nucleus. It is found in the cytoplasm. Its function is as follows. Acts as a transcriptional regulator. Binds DNA and RNA. This Xenopus laevis (African clawed frog) protein is Heterogeneous nuclear ribonucleoprotein D-like-B (hnrnpdl-b).